The chain runs to 24 residues: Brevinin-1CSa (24 aa).

The cysteines at positions 18 and 24 are disulfide-linked.

As to expression, expressed by the skin glands.

The protein localises to the secreted. It localises to the target cell membrane. Functionally, antibacterial peptide. Has activity against the Gram-positive bacterium S.aureus (MIC=2 uM) and the Gram-negative bacterium E.coli (MIC=32 uM). Has a strong hemolytic activity (LC(50)=5 uM). This Rana cascadae (Cascades frog) protein is Brevinin-1CSa.